We begin with the raw amino-acid sequence, 1093 residues long: Protein transport protein Sec24A (1093 aa).

Disordered regions lie at residues 1–29, 60–168, 189–226, and 294–328; these read MSQP…SGSP, HPIP…TSLT, GPSV…ALTP, and SLPP…TQTP. 2 stretches are compositionally biased toward polar residues: residues 112 to 126 and 138 to 168; these read ASQN…SSSF and WQYN…TSLT. Composition is skewed to pro residues over residues 191–201 and 209–221; these read SVPPLVNPPLP and PHGP…PPPV. A compositionally biased stretch (polar residues) spans 299–328; sequence YQNTTPPGATGVPPSSLNYPSGPQAFTQTP. Zn(2+) is bound by residues C431, C434, C452, and C455. The interval 431–455 is zinc finger-like; it reads CRSCRTYINPFVSFLDQRRWKCNLC. Residues 966-1038 form a Gelsolin-like repeat; the sequence is PQPPILQLSV…TPESARIIAF (73 aa).

It belongs to the SEC23/SEC24 family. SEC24 subfamily. COPII is composed of at least five proteins: the Sec23/24 complex, the Sec13/31 complex and Sar1. Interacts with TMED2. Interacts (as part of the Sec23/24 complex) with SEC22B; recruits SEC22B into COPII-coated vesicles for its transport from the endoplasmic reticulum to the Golgi. Interacts with STING1; promoting STING1 translocation to COPII vesicles in a STEEP1-dependent manner. Interacts with TMEM39A. Interacts with SACM1L; this interaction is reduced in the absence of TMEM39A. Interacts with kinase FAM20C; transport of FAM20C from the endoplasmic reticulum to the Golgi is likely to be mediated by COPII vesicles.

The protein resides in the cytoplasmic vesicle. It localises to the COPII-coated vesicle membrane. Its subcellular location is the endoplasmic reticulum membrane. It is found in the cytoplasm. The protein localises to the cytosol. Its function is as follows. Component of the coat protein complex II (COPII) which promotes the formation of transport vesicles from the endoplasmic reticulum (ER). The coat has two main functions, the physical deformation of the endoplasmic reticulum membrane into vesicles and the selection of cargo molecules for their transport to the Golgi complex. Plays a central role in cargo selection within the COPII complex and together with SEC24B may have a different specificity compared to SEC24C and SEC24D. May package preferentially cargos with cytoplasmic DxE or LxxLE motifs and may also recognize conformational epitopes. This chain is Protein transport protein Sec24A, found in Homo sapiens (Human).